The sequence spans 275 residues: tRNA pseudouridine synthase A (275 aa).

The active-site Nucleophile is aspartate 56. Tyrosine 110 contacts substrate.

It belongs to the tRNA pseudouridine synthase TruA family.

It catalyses the reaction uridine(38/39/40) in tRNA = pseudouridine(38/39/40) in tRNA. Its function is as follows. Formation of pseudouridine at positions 38, 39 and 40 in the anticodon stem and loop of transfer RNAs. This chain is tRNA pseudouridine synthase A, found in Haloarcula marismortui (strain ATCC 43049 / DSM 3752 / JCM 8966 / VKM B-1809) (Halobacterium marismortui).